We begin with the raw amino-acid sequence, 195 residues long: Pyruvoyl-dependent arginine decarboxylase AaxB (195 aa).

Serine 53 is modified (pyruvic acid (Ser)).

Belongs to the pyruvoyl-dependent arginine decarboxylase family. As to quaternary structure, trimer of an alpha-beta dimer. Pyruvate is required as a cofactor.

It localises to the cytoplasm. It carries out the reaction L-arginine + H(+) = agmatine + CO2. Functionally, part of the AaxABC system, catalyzes the decarboxylation of L-arginine. The arginine uptake by the bacterium in the macrophage may be a virulence factor against the host innate immune response. This Chlamydia trachomatis serovar D (strain ATCC VR-885 / DSM 19411 / UW-3/Cx) protein is Pyruvoyl-dependent arginine decarboxylase AaxB (aaxB).